The following is a 367-amino-acid chain: UDP-N-acetylglucosamine--N-acetylmuramyl-(pentapeptide) pyrophosphoryl-undecaprenol N-acetylglucosamine transferase (367 aa).

Residues 11–13 (TAG), Asn125, Arg163, Ser197, and Gln289 each bind UDP-N-acetyl-alpha-D-glucosamine.

The protein belongs to the glycosyltransferase 28 family. MurG subfamily.

It localises to the cell membrane. The enzyme catalyses di-trans,octa-cis-undecaprenyl diphospho-N-acetyl-alpha-D-muramoyl-L-alanyl-D-glutamyl-meso-2,6-diaminopimeloyl-D-alanyl-D-alanine + UDP-N-acetyl-alpha-D-glucosamine = di-trans,octa-cis-undecaprenyl diphospho-[N-acetyl-alpha-D-glucosaminyl-(1-&gt;4)]-N-acetyl-alpha-D-muramoyl-L-alanyl-D-glutamyl-meso-2,6-diaminopimeloyl-D-alanyl-D-alanine + UDP + H(+). It participates in cell wall biogenesis; peptidoglycan biosynthesis. Cell wall formation. Catalyzes the transfer of a GlcNAc subunit on undecaprenyl-pyrophosphoryl-MurNAc-pentapeptide (lipid intermediate I) to form undecaprenyl-pyrophosphoryl-MurNAc-(pentapeptide)GlcNAc (lipid intermediate II). This Clavibacter sepedonicus (Clavibacter michiganensis subsp. sepedonicus) protein is UDP-N-acetylglucosamine--N-acetylmuramyl-(pentapeptide) pyrophosphoryl-undecaprenol N-acetylglucosamine transferase.